Here is a 267-residue protein sequence, read N- to C-terminus: Acyl-[acyl-carrier-protein]--UDP-N-acetylglucosamine O-acyltransferase (267 aa).

Belongs to the transferase hexapeptide repeat family. LpxA subfamily. In terms of assembly, homotrimer.

The protein resides in the cytoplasm. The enzyme catalyses a (3R)-hydroxyacyl-[ACP] + UDP-N-acetyl-alpha-D-glucosamine = a UDP-3-O-[(3R)-3-hydroxyacyl]-N-acetyl-alpha-D-glucosamine + holo-[ACP]. It functions in the pathway glycolipid biosynthesis; lipid IV(A) biosynthesis; lipid IV(A) from (3R)-3-hydroxytetradecanoyl-[acyl-carrier-protein] and UDP-N-acetyl-alpha-D-glucosamine: step 1/6. In terms of biological role, involved in the biosynthesis of lipid A, a phosphorylated glycolipid that anchors the lipopolysaccharide to the outer membrane of the cell. This Hamiltonella defensa subsp. Acyrthosiphon pisum (strain 5AT) protein is Acyl-[acyl-carrier-protein]--UDP-N-acetylglucosamine O-acyltransferase.